We begin with the raw amino-acid sequence, 331 residues long: DNA-directed RNA polymerase subunit alpha (331 aa).

The alpha N-terminal domain (alpha-NTD) stretch occupies residues 1 to 226 (MLIAQRPTLT…ELFGLARELN (226 aa)). Residues 243-331 (LSSELSMPIE…SYDEDETTTN (89 aa)) form an alpha C-terminal domain (alpha-CTD) region.

It belongs to the RNA polymerase alpha chain family. Homodimer. The RNAP catalytic core consists of 2 alpha, 1 beta, 1 beta' and 1 omega subunit. When a sigma factor is associated with the core the holoenzyme is formed, which can initiate transcription.

It catalyses the reaction RNA(n) + a ribonucleoside 5'-triphosphate = RNA(n+1) + diphosphate. Functionally, DNA-dependent RNA polymerase catalyzes the transcription of DNA into RNA using the four ribonucleoside triphosphates as substrates. The sequence is that of DNA-directed RNA polymerase subunit alpha from Clavibacter michiganensis subsp. michiganensis (strain NCPPB 382).